The chain runs to 604 residues: Elongation factor 4 (604 aa).

One can recognise a tr-type G domain in the interval 7 to 189 (KRIRNFCIIA…SVVDRVPPPA (183 aa)). GTP contacts are provided by residues 19–24 (DHGKST) and 136–139 (NKID).

The protein belongs to the TRAFAC class translation factor GTPase superfamily. Classic translation factor GTPase family. LepA subfamily.

It is found in the cell inner membrane. The enzyme catalyses GTP + H2O = GDP + phosphate + H(+). Functionally, required for accurate and efficient protein synthesis under certain stress conditions. May act as a fidelity factor of the translation reaction, by catalyzing a one-codon backward translocation of tRNAs on improperly translocated ribosomes. Back-translocation proceeds from a post-translocation (POST) complex to a pre-translocation (PRE) complex, thus giving elongation factor G a second chance to translocate the tRNAs correctly. Binds to ribosomes in a GTP-dependent manner. This is Elongation factor 4 from Synechococcus sp. (strain CC9311).